Consider the following 341-residue polypeptide: Antihemorrhagic factor BJ46a (341 aa).

Residues 1-19 form the signal peptide; it reads MNSLVALVLLGQIIGSTLS. Cystatin fetuin-A-type domains are found at residues 22-130 and 141-254; these read VRGD…AKCH and RNCP…SDCV. Residues 23-25 carry the Cell attachment site motif; sequence RGD. Intrachain disulfides connect C28–C332, C85–C96, C110–C129, C143–C146, C205–C217, and C230–C253. N-linked (GlcNAc...) asparagine glycosylation occurs at N95. N204 carries N-linked (GlcNAc...) asparagine glycosylation. Residues N282 and N293 are each glycosylated (N-linked (GlcNAc...) asparagine).

In terms of assembly, homodimer. Expressed by the liver.

The protein localises to the secreted. Potent inhibitor of hemorrhagic activity but also proteolytic activities of atrolysin C and jararhagin. Inhibition occurs by formation of a non-covalent complex between BJ46a and the proteinases at their metalloproteinase domains. This Bothrops jararaca (Jararaca) protein is Antihemorrhagic factor BJ46a.